A 468-amino-acid chain; its full sequence is ATP synthase subunit beta (468 aa).

Residue 156 to 163 (GGAGVGKT) participates in ATP binding.

Belongs to the ATPase alpha/beta chains family. As to quaternary structure, F-type ATPases have 2 components, CF(1) - the catalytic core - and CF(0) - the membrane proton channel. CF(1) has five subunits: alpha(3), beta(3), gamma(1), delta(1), epsilon(1). CF(0) has three main subunits: a(1), b(2) and c(9-12). The alpha and beta chains form an alternating ring which encloses part of the gamma chain. CF(1) is attached to CF(0) by a central stalk formed by the gamma and epsilon chains, while a peripheral stalk is formed by the delta and b chains.

The protein resides in the cell inner membrane. The catalysed reaction is ATP + H2O + 4 H(+)(in) = ADP + phosphate + 5 H(+)(out). Functionally, produces ATP from ADP in the presence of a proton gradient across the membrane. The catalytic sites are hosted primarily by the beta subunits. This chain is ATP synthase subunit beta, found in Sulfurimonas denitrificans (strain ATCC 33889 / DSM 1251) (Thiomicrospira denitrificans (strain ATCC 33889 / DSM 1251)).